The sequence spans 349 residues: Hydroxymethylglutaryl-CoA synthase (349 aa).

Residues aspartate 29 and alanine 30 each contribute to the (3S)-3-hydroxy-3-methylglutaryl-CoA site. Glutamate 81 serves as the catalytic Proton donor/acceptor. Cysteine 113 and threonine 154 together coordinate (3S)-3-hydroxy-3-methylglutaryl-CoA. Cysteine 113 (acyl-thioester intermediate) is an active-site residue. Arginine 202 provides a ligand contact to CoA. 2 residues coordinate (3S)-3-hydroxy-3-methylglutaryl-CoA: threonine 204 and histidine 237. Histidine 237 functions as the Proton donor/acceptor in the catalytic mechanism. Lysine 242 provides a ligand contact to CoA. Lysine 246, asparagine 269, and serine 299 together coordinate (3S)-3-hydroxy-3-methylglutaryl-CoA.

It belongs to the thiolase-like superfamily. Archaeal HMG-CoA synthase family. In terms of assembly, interacts with acetoacetyl-CoA thiolase that catalyzes the precedent step in the pathway and with a DUF35 protein. The acetoacetyl-CoA thiolase/HMG-CoA synthase complex channels the intermediate via a fused CoA-binding site, which allows for efficient coupling of the endergonic thiolase reaction with the exergonic HMGCS reaction.

It catalyses the reaction acetoacetyl-CoA + acetyl-CoA + H2O = (3S)-3-hydroxy-3-methylglutaryl-CoA + CoA + H(+). It participates in metabolic intermediate biosynthesis; (R)-mevalonate biosynthesis; (R)-mevalonate from acetyl-CoA: step 2/3. In terms of biological role, catalyzes the condensation of acetyl-CoA with acetoacetyl-CoA to form 3-hydroxy-3-methylglutaryl-CoA (HMG-CoA). Functions in the mevalonate (MVA) pathway leading to isopentenyl diphosphate (IPP), a key precursor for the biosynthesis of isoprenoid compounds that are building blocks of archaeal membrane lipids. The protein is Hydroxymethylglutaryl-CoA synthase of Methanosarcina mazei (strain ATCC BAA-159 / DSM 3647 / Goe1 / Go1 / JCM 11833 / OCM 88) (Methanosarcina frisia).